The chain runs to 117 residues: Virion membrane protein OPG147 (117 aa).

Residues 1 to 21 (MITLFLILCYFILIFNIIVPA) traverse the membrane as a helical; Signal-anchor for type III membrane protein segment. Residues 22 to 117 (ISEKMRRERA…RAYSDLFFTT (96 aa)) lie on the Virion surface side of the membrane.

It belongs to the orthopoxvirus OPG147 family. As to quaternary structure, part of a stable entry-fusion complex (EFC) which is at least composed of proteins OPG143, OPG147, OPG155, OPG086, OPG094, OPG107, OPG104, and OPG099. Formation of the viral membrane is necessary for the assembly of the complex. In terms of processing, contains two intramolecular disulfide bonds. They are created by the viral disulfide bond formation pathway, a poxvirus-specific pathway that operates on the cytoplasmic side of the MV membranes.

Its subcellular location is the virion membrane. Envelope protein part of the entry-fusion complex responsible for the virus membrane fusion with host cell membrane during virus entry. Also plays a role in cell-cell fusion (syncytium formation). In Homo sapiens (Human), this protein is Virion membrane protein OPG147 (OPG147).